Here is a 91-residue protein sequence, read N- to C-terminus: UPF0223 protein SACOL1106 (91 aa).

Belongs to the UPF0223 family.

In Staphylococcus aureus (strain COL), this protein is UPF0223 protein SACOL1106.